The primary structure comprises 288 residues: Phytanoyl-CoA dioxygenase domain-containing protein 1 homolog (288 aa).

2-oxoglutarate contacts are provided by residues Lys-95, Met-134, 149–151 (HVD), and Trp-167. Residues His-149 and Asp-151 each coordinate Fe cation. Residue His-242 coordinates Fe cation. Positions 244 and 253 each coordinate 2-oxoglutarate.

The protein belongs to the PhyH family. PHYHD1 subfamily. Fe cation serves as cofactor.

Has alpha-ketoglutarate-dependent dioxygenase activity. Does not show detectable activity towards fatty acid CoA thioesters. Is not expected to be active with phytanoyl CoA. This Caenorhabditis elegans protein is Phytanoyl-CoA dioxygenase domain-containing protein 1 homolog.